A 465-amino-acid chain; its full sequence is Serine/threonine-protein kinase 38 (465 aa).

An N-acetylalanine modification is found at Ala2. An interaction with S100B region spans residues 62 to 87 (KRLRRSAHARKETEFLRLKRTRLGLE). Phosphothreonine is present on Thr74. The 294-residue stretch at 89–382 (FESLKVIGRG…VEEIKNNLFF (294 aa)) folds into the Protein kinase domain. Residues 95–103 (IGRGAFGEV) and Lys118 each bind ATP. The active-site Proton acceptor is Asp212. Position 264 is a phosphoserine (Ser264). Ser281 carries the post-translational modification Phosphoserine; by autocatalysis. A UFM1-interacting motif (UFIM) motif is present at residues 306-311 (WSLGVI). Residues 383–455 (EGVDWEHIRE…KRFEGLTARG (73 aa)) enclose the AGC-kinase C-terminal domain. Position 444 is a phosphothreonine; by STK24/MST3 (Thr444).

This sequence belongs to the protein kinase superfamily. AGC Ser/Thr protein kinase family. In terms of assembly, homodimeric S100B binds two molecules of STK38. Interacts with MOB1 and MOB2. Interacts with MAP3K1 and MAP3K2 (via the kinase catalytic domain). Forms a tripartite complex with MOBKL1B and STK3/MST2. Interacts with MICAL1; leading to inhibit the protein kinase activity by antagonizing activation by MST1/STK4. It depends on Mg(2+) as a cofactor. Post-translationally, ISGylated. Phosphorylated by STK3/MST2 and this is enhanced by MOBKL1B. In terms of tissue distribution, expressed at high levels in spleen, lung, thymus, brain and fat tissue.

The protein localises to the nucleus. It localises to the cytoplasm. The protein resides in the chromosome. The enzyme catalyses L-seryl-[protein] + ATP = O-phospho-L-seryl-[protein] + ADP + H(+). It catalyses the reaction L-threonyl-[protein] + ATP = O-phospho-L-threonyl-[protein] + ADP + H(+). With respect to regulation, activated by binding of S100B which releases autoinhibitory N-lobe interactions, enabling ATP to bind and the autophosphorylation of Ser-281. Thr-444 then undergoes calcium-dependent phosphorylation by STK24/MST3. Interactions between phosphorylated Thr-444 and the N-lobe promote additional structural changes that complete the activation of the kinase. Autoinhibition is also released by the binding of MOB1/MOBKL1A and MOB2/HCCA2 to the N-terminal of STK38. In terms of biological role, serine/threonine-protein kinase that acts as a negative regulator of MAP3K1/2 signaling. Converts MAP3K2 from its phosphorylated form to its non-phosphorylated form and inhibits autophosphorylation of MAP3K2. Acts as an ufmylation 'reader' in a kinase-independent manner: specifically recognizes and binds mono-ufmylated histone H4 in response to DNA damage, promoting the recruitment of SUV39H1 to the double-strand breaks, resulting in ATM activation. This chain is Serine/threonine-protein kinase 38, found in Mus musculus (Mouse).